Consider the following 638-residue polypeptide: Pentatricopeptide repeat-containing protein At3g49730 (638 aa).

12 PPR repeats span residues 130–164, 166–200, 201–231, 235–269, 270–304, 305–340, 341–375, 376–410, 411–445, 446–480, 483–513, and 520–554; these read SYEV…NPEL, EPEL…GLEP, DEYV…MREK, NLRY…GLEP, DIVV…GFEP, NVNC…GCEA, DIVT…GVMP, SQVT…GCHP, DLLI…GLSP, GVDT…GIFS, QYGT…ISNK, and NVSA…DLMP. Residues 604–638 are disordered; it reads LIEKAKPKGNKEGKKKGTDHQRYKGRGERSRAKAL.

Belongs to the PPR family. P subfamily.

The sequence is that of Pentatricopeptide repeat-containing protein At3g49730 from Arabidopsis thaliana (Mouse-ear cress).